We begin with the raw amino-acid sequence, 33 residues long: Cytochrome b6-f complex subunit 8 (33 aa).

Residues 2-22 (LISLGWAALAATFTFSIAMVV) form a helical membrane-spanning segment.

The protein belongs to the PetN family. The 4 large subunits of the cytochrome b6-f complex are cytochrome b6, subunit IV (17 kDa polypeptide, PetD), cytochrome f and the Rieske protein, while the 4 small subunits are PetG, PetL, PetM and PetN. The complex functions as a dimer.

Its subcellular location is the cellular thylakoid membrane. Component of the cytochrome b6-f complex, which mediates electron transfer between photosystem II (PSII) and photosystem I (PSI), cyclic electron flow around PSI, and state transitions. In Synechococcus sp. (strain RCC307), this protein is Cytochrome b6-f complex subunit 8.